A 701-amino-acid polypeptide reads, in one-letter code: Polyribonucleotide nucleotidyltransferase (701 aa).

The Mg(2+) site is built by aspartate 487 and aspartate 493. The region spanning 554–613 (PTMIAMKIDTDKIRDVIGKGGATIRAICEETKASIDIEDDGSIKIFGESKEAAEAARQRV) is the KH domain. The region spanning 623 to 691 (GKIYLGKVER…NRGRIKLSIK (69 aa)) is the S1 motif domain.

Belongs to the polyribonucleotide nucleotidyltransferase family. In terms of assembly, component of the RNA degradosome, which is a multiprotein complex involved in RNA processing and mRNA degradation. Requires Mg(2+) as cofactor.

It localises to the cytoplasm. It catalyses the reaction RNA(n+1) + phosphate = RNA(n) + a ribonucleoside 5'-diphosphate. Involved in mRNA degradation. Catalyzes the phosphorolysis of single-stranded polyribonucleotides processively in the 3'- to 5'-direction. This Pseudomonas syringae pv. tomato (strain ATCC BAA-871 / DC3000) protein is Polyribonucleotide nucleotidyltransferase.